Reading from the N-terminus, the 674-residue chain is Translation factor GUF1, mitochondrial (674 aa).

A mitochondrion-targeting transit peptide spans 1–48; it reads MRGCLQPARWLTTATLRRPLLSCPRQLPTRYNPFPRPFHHAPVLQARQ. A tr-type G domain is found at 66–246; that stretch reads ERYRNFCIVA…AIIESIPALL (181 aa). GTP contacts are provided by residues 75–82, 139–143, and 193–196; these read AHVDHGKS, DTPGH, and NKVD.

It belongs to the TRAFAC class translation factor GTPase superfamily. Classic translation factor GTPase family. LepA subfamily.

It localises to the mitochondrion inner membrane. The catalysed reaction is GTP + H2O = GDP + phosphate + H(+). Functionally, promotes mitochondrial protein synthesis. May act as a fidelity factor of the translation reaction, by catalyzing a one-codon backward translocation of tRNAs on improperly translocated ribosomes. Binds to mitochondrial ribosomes in a GTP-dependent manner. The polypeptide is Translation factor GUF1, mitochondrial (Arthroderma otae (strain ATCC MYA-4605 / CBS 113480) (Microsporum canis)).